Here is a 36-residue protein sequence, read N- to C-terminus: Photosystem I reaction center subunit VIII (36 aa).

A helical transmembrane segment spans residues 8–28 (AILVPIVGLVFPALSMALFFI).

Belongs to the PsaI family.

It localises to the plastid. It is found in the chloroplast thylakoid membrane. In terms of biological role, may help in the organization of the PsaL subunit. This chain is Photosystem I reaction center subunit VIII, found in Phaeodactylum tricornutum (strain CCAP 1055/1).